The sequence spans 197 residues: Protein GrpE (197 aa).

The segment at 1-43 (MSSKEQKTPDGQAPEEIVTEQHEEVESVESAESAEQVDPRDEE) is disordered.

It belongs to the GrpE family. In terms of assembly, homodimer.

It is found in the cytoplasm. Its function is as follows. Participates actively in the response to hyperosmotic and heat shock by preventing the aggregation of stress-denatured proteins, in association with DnaK and GrpE. It is the nucleotide exchange factor for DnaK and may function as a thermosensor. Unfolded proteins bind initially to DnaJ; upon interaction with the DnaJ-bound protein, DnaK hydrolyzes its bound ATP, resulting in the formation of a stable complex. GrpE releases ADP from DnaK; ATP binding to DnaK triggers the release of the substrate protein, thus completing the reaction cycle. Several rounds of ATP-dependent interactions between DnaJ, DnaK and GrpE are required for fully efficient folding. In Cronobacter sakazakii (strain ATCC BAA-894) (Enterobacter sakazakii), this protein is Protein GrpE.